The chain runs to 192 residues: Pyridoxal 5'-phosphate synthase subunit PdxT (192 aa).

53–55 (GES) is an L-glutamine binding site. The active-site Nucleophile is the Cys-85. Residues Arg-112 and 140–141 (IR) each bind L-glutamine. Residues His-176 and Glu-178 each act as charge relay system in the active site.

Belongs to the glutaminase PdxT/SNO family. As to quaternary structure, in the presence of PdxS, forms a dodecamer of heterodimers. Only shows activity in the heterodimer.

It catalyses the reaction aldehydo-D-ribose 5-phosphate + D-glyceraldehyde 3-phosphate + L-glutamine = pyridoxal 5'-phosphate + L-glutamate + phosphate + 3 H2O + H(+). It carries out the reaction L-glutamine + H2O = L-glutamate + NH4(+). The protein operates within cofactor biosynthesis; pyridoxal 5'-phosphate biosynthesis. Functionally, catalyzes the hydrolysis of glutamine to glutamate and ammonia as part of the biosynthesis of pyridoxal 5'-phosphate. The resulting ammonia molecule is channeled to the active site of PdxS. This Natronomonas pharaonis (strain ATCC 35678 / DSM 2160 / CIP 103997 / JCM 8858 / NBRC 14720 / NCIMB 2260 / Gabara) (Halobacterium pharaonis) protein is Pyridoxal 5'-phosphate synthase subunit PdxT.